We begin with the raw amino-acid sequence, 232 residues long: Probable phospholipid hydroperoxide glutathione peroxidase 6, mitochondrial (232 aa).

The transit peptide at 1 to 54 (MLRSSIRLLYIRRTSPLLRSLSSSSSSSSSKRFDSAKPLFNSHRIISLPISTTG) directs the protein to the mitochondrion. Residue Cys-105 is part of the active site.

This sequence belongs to the glutathione peroxidase family. Expressed at a low but detectable level in leaves, stems, and flowers, but at a higher level in siliques and even higher in roots. Predominantly expressed in seeds.

Its subcellular location is the mitochondrion. The enzyme catalyses a hydroperoxy polyunsaturated fatty acid + 2 glutathione = a hydroxy polyunsaturated fatty acid + glutathione disulfide + H2O. Protects cells and enzymes from oxidative damage, by catalyzing the reduction of hydrogen peroxide, lipid peroxides and organic hydroperoxide, by glutathione. This Arabidopsis thaliana (Mouse-ear cress) protein is Probable phospholipid hydroperoxide glutathione peroxidase 6, mitochondrial (GPX6).